The sequence spans 107 residues: uncharacterized protein (107 aa).

The signal sequence occupies residues 1–20 (MYIKGRLIFFFVVLVIALCS).

This is an uncharacterized protein from Listeria monocytogenes serovar 1/2a (strain ATCC BAA-679 / EGD-e).